The chain runs to 1386 residues: Adhesin AWP3b (1386 aa).

Residues 1 to 19 (MISFVTLLAILGLLSISWA) form the signal peptide. Cystine bridges form between Cys-115–Cys-145, Cys-144–Cys-178, and Cys-304–Cys-341. N-linked (GlcNAc...) asparagine glycosylation is present at Asn-117. N-linked (GlcNAc...) asparagine glycosylation is found at Asn-315, Asn-345, Asn-468, and Asn-526. The segment at 429 to 507 (TTDSPGHTIT…SSPTSDFSSV (79 aa)) is disordered. Disordered regions lie at residues 530 to 553 (IVDS…SSSM) and 612 to 690 (TTDS…FSSV). 2 N-linked (GlcNAc...) asparagine glycosylation sites follow: Asn-651 and Asn-709. Disordered stretches follow at residues 714–739 (VDSS…MSSS) and 795–873 (TTDS…FSSV). 5 N-linked (GlcNAc...) asparagine glycosylation sites follow: Asn-834, Asn-898, Asn-1008, Asn-1017, and Asn-1096. The tract at residues 1000–1032 (TIQESELSNTSRTTMTSNSSVSISSTSSRSSFS) is disordered. Polar residues-rich tracts occupy residues 1140–1150 (SHPVATNSGDK) and 1159–1177 (QVST…SSFD). A disordered region spans residues 1140-1186 (SHPVATNSGDKPTTPKRSEQVSTTMTSSGPTPDTSSFDTDGMSAYSR). A glycan (N-linked (GlcNAc...) asparagine) is linked at Asn-1197. Residues 1198-1218 (KSSTSQLGNNKQTFSNLQLES) are compositionally biased toward polar residues. Residues 1198–1227 (KSSTSQLGNNKQTFSNLQLESTRPHSENEV) are disordered. Asn-1229 carries an N-linked (GlcNAc...) asparagine glycan. Over residues 1241–1259 (STYGTNNVNPLSPTGSISI) the composition is skewed to polar residues. The interval 1241 to 1269 (STYGTNNVNPLSPTGSISIPLTEDGQGDN) is disordered. N-linked (GlcNAc...) asparagine glycosylation occurs at Asn-1287.

It localises to the secreted. The protein resides in the cell wall. Its function is as follows. May play a role in cell adhesion. In Candida glabrata (strain ATCC 2001 / BCRC 20586 / JCM 3761 / NBRC 0622 / NRRL Y-65 / CBS 138) (Yeast), this protein is Adhesin AWP3b.